The following is a 108-amino-acid chain: UPF0145 protein ACIAD2946 (108 aa).

The protein belongs to the UPF0145 family.

In Acinetobacter baylyi (strain ATCC 33305 / BD413 / ADP1), this protein is UPF0145 protein ACIAD2946.